The following is a 203-amino-acid chain: Outer-membrane lipoprotein carrier protein (203 aa).

Positions 1 to 21 (MKKMAIACALLSSVVASSVWA) are cleaved as a signal peptide. Positions 178–203 (QQNGAVDPSKFTFTPPQGVTIDDQRK) are disordered.

The protein belongs to the LolA family. In terms of assembly, monomer.

It is found in the periplasm. Functionally, participates in the translocation of lipoproteins from the inner membrane to the outer membrane. Only forms a complex with a lipoprotein if the residue after the N-terminal Cys is not an aspartate (The Asp acts as a targeting signal to indicate that the lipoprotein should stay in the inner membrane). The protein is Outer-membrane lipoprotein carrier protein of Salmonella paratyphi A (strain ATCC 9150 / SARB42).